A 313-amino-acid polypeptide reads, in one-letter code: Ribosomal RNA small subunit methyltransferase H (313 aa).

S-adenosyl-L-methionine contacts are provided by residues 35 to 37 (GGH), aspartate 55, phenylalanine 81, aspartate 103, and glutamine 110.

Belongs to the methyltransferase superfamily. RsmH family.

It localises to the cytoplasm. The catalysed reaction is cytidine(1402) in 16S rRNA + S-adenosyl-L-methionine = N(4)-methylcytidine(1402) in 16S rRNA + S-adenosyl-L-homocysteine + H(+). Specifically methylates the N4 position of cytidine in position 1402 (C1402) of 16S rRNA. The polypeptide is Ribosomal RNA small subunit methyltransferase H (Pseudomonas syringae pv. syringae (strain B728a)).